The primary structure comprises 763 residues: Eukaryotic translation initiation factor 3 subunit B (763 aa).

The interval Met1–Asp136 is sufficient for interaction with HCR1 and TIF32. The tract at residues Arg28–Phe261 is sufficient for interaction with PIC8. Ser61 is modified (phosphoserine). At Tyr67 the chain carries Phosphotyrosine. In terms of domain architecture, RRM spans Gln77–Asp162. WD repeat units lie at residues Arg228–Arg266, Val277–Thr325, Leu373–Thr416, Glu484–Tyr524, Ile544–Ile589, and Pro605–Asp650. The residue at position 669 (Ser669) is a Phosphoserine.

It belongs to the eIF-3 subunit B family. The eukaryotic translation initiation factor 3 (eIF-3) core complex is composed of TIF32, PRT1, NIP1, TIF34 and TIF35. A subcomplex of TIF32, NIP1 and PRT1 mediates the interaction with eIF-1, TIF5/eIF-5 and HCR1. The factors eIF-1, eIF-2, eIF-3, TIF5/eIF-5 and methionyl-tRNAi form a multifactor complex (MFC) that may bind to the 40S ribosome.

The protein resides in the cytoplasm. RNA-binding component of the eukaryotic translation initiation factor 3 (eIF-3) complex, which is involved in protein synthesis of a specialized repertoire of mRNAs and, together with other initiation factors, stimulates binding of mRNA and methionyl-tRNAi to the 40S ribosome. The eIF-3 complex specifically targets and initiates translation of a subset of mRNAs involved in cell proliferation. This chain is Eukaryotic translation initiation factor 3 subunit B, found in Saccharomyces cerevisiae (strain ATCC 204508 / S288c) (Baker's yeast).